Consider the following 506-residue polypeptide: MIRVRPNEVTRIIRQQVKKYRQELKIVNVGTVLQVGDGIARIYGLEKVMAGELVEFDEGTIGIALNLEADNVGAVLMGEATNLKEGASVKTTGKIAQIPVGRGFLGRVVDALARPIDGKGDIASFTTRLIESPAPGIVSRRSVHEPLQTGLIAIDAMIPIGRGQRELIIGDRQTGKTAVATDTILNQKGQGVICVYVAIGQKASSVSQIVTTLEKRGAMEYTIIVAENADSSATLQYLAPYTGAALAEYFMYNGKHTLVIYDDLSKQAQAYRQMSLLLRRPPGREAYPGDVFYLHSRLLERAAKLSDELGQGSMTALPIVETQAGDVSAYIPTNVISITDGQVFLSADIFNSGIRPAINVGISVSRVGSAAQIKAMKQVAGKLKLELAQFAELEAFSQFASDLDQATQNQLARGARLRELLKQPQASPLSVADQVATIYTGINGYLDDINLEDVRGFLIELREHINNEKPTFKEIINKTKTFTQEAELLLKFTIIDLKKNFKKRIK.

170 to 177 (GDRQTGKT) provides a ligand contact to ATP.

This sequence belongs to the ATPase alpha/beta chains family. As to quaternary structure, F-type ATPases have 2 components, CF(1) - the catalytic core - and CF(0) - the membrane proton channel. CF(1) has five subunits: alpha(3), beta(3), gamma(1), delta(1), epsilon(1). CF(0) has four main subunits: a, b, b' and c.

The protein resides in the plastid. Its subcellular location is the chloroplast thylakoid membrane. It carries out the reaction ATP + H2O + 4 H(+)(in) = ADP + phosphate + 5 H(+)(out). Produces ATP from ADP in the presence of a proton gradient across the membrane. The alpha chain is a regulatory subunit. This chain is ATP synthase subunit alpha, chloroplastic, found in Euglena gracilis.